A 418-amino-acid polypeptide reads, in one-letter code: Ras association domain-containing protein 5 (418 aa).

Residues 1-118 are disordered; it reads MAMASPAIGQ…QPQDPRVPAE (118 aa). The residue at position 2 (A2) is an N-acetylthreonine. A compositionally biased stretch (low complexity) spans 77–89; the sequence is SRPARPLRPGLQQ. A Phorbol-ester/DAG-type zinc finger spans residues 122 to 170; the sequence is GHCFAELVLPGGPGWCDLCGREVLRQALRCTNCKFTCHPECRSLIQLDC. 2 positions are modified to phosphoserine: S182 and S279. A Ras-associating domain is found at 274-364; that stretch reads TDKRTSFYLP…LSFVLKENET (91 aa). T352 is modified (phosphothreonine). Residues 366 to 413 enclose the SARAH domain; sequence EVEWDAFSIPELQNFLTILEKEEQDKIQQVQKKYDKFRQKLEEALRES.

In terms of assembly, interacts directly with activated HRAS; a RASSF5-STK4/MST1 complex probably associates with activated HRAS. Interacts with KRAS. Probably interacts with Ras-like GTPases RRAS, MRAS, RAP1B, RAP2A and RALA. Interacts with RRAS2. Can self-associate. Interacts with RSSF1 isoform A. The RSSF1 isoform A-RSSF5 heterodimer probably mediates the association of RSSF1 with HRAS. Isoform 2 interacts with activated RAP1A and ITGAL/LFA-1. Binds STK4/MST1, inhibiting STK4/MST1 autoactivation. In terms of tissue distribution, widely expressed. Frequently down-regulated in lung tumor cell lines and primary lung tumors.

The protein resides in the cytoplasm. It localises to the cytoskeleton. Its function is as follows. Potential tumor suppressor. Seems to be involved in lymphocyte adhesion by linking RAP1A activation upon T-cell receptor or chemokine stimulation to integrin activation. Isoform 2 stimulates lymphocyte polarization and the patch-like distribution of ITGAL/LFA-1, resulting in an enhanced adhesion to ICAM1. Together with RAP1A may participate in regulation of microtubule growth. The association of isoform 2 with activated RAP1A is required for directional movement of endothelial cells during wound healing. May be involved in regulation of Ras apoptotic function. The RASSF5-STK4/MST1 complex may mediate HRAS and KRAS induced apoptosis. This chain is Ras association domain-containing protein 5 (RASSF5), found in Homo sapiens (Human).